The sequence spans 1101 residues: Error-prone DNA polymerase (1101 aa).

The interval 1055 to 1101 (ADLGHPMDSAVGQTTPQTDSAPRPRPQPRAMHPREQAKRLFPSRDFH) is disordered. Positions 1065–1074 (VGQTTPQTDS) are enriched in polar residues. Residues 1086–1101 (HPREQAKRLFPSRDFH) are compositionally biased toward basic and acidic residues.

Belongs to the DNA polymerase type-C family. DnaE2 subfamily.

It is found in the cytoplasm. The enzyme catalyses DNA(n) + a 2'-deoxyribonucleoside 5'-triphosphate = DNA(n+1) + diphosphate. DNA polymerase involved in damage-induced mutagenesis and translesion synthesis (TLS). It is not the major replicative DNA polymerase. The polypeptide is Error-prone DNA polymerase (Ruegeria pomeroyi (strain ATCC 700808 / DSM 15171 / DSS-3) (Silicibacter pomeroyi)).